Here is a 429-residue protein sequence, read N- to C-terminus: Phosphomethylpyrimidine synthase (429 aa).

Substrate is bound by residues N66, M95, Y124, H163, 185–187 (SRG), 226–229 (DGLR), and E265. Zn(2+) is bound at residue H269. Y292 contributes to the substrate binding site. H333 is a Zn(2+) binding site. Residues C407, C410, and C414 each contribute to the [4Fe-4S] cluster site.

The protein belongs to the ThiC family. [4Fe-4S] cluster is required as a cofactor.

It carries out the reaction 5-amino-1-(5-phospho-beta-D-ribosyl)imidazole + S-adenosyl-L-methionine = 4-amino-2-methyl-5-(phosphooxymethyl)pyrimidine + CO + 5'-deoxyadenosine + formate + L-methionine + 3 H(+). Its pathway is cofactor biosynthesis; thiamine diphosphate biosynthesis. Catalyzes the synthesis of the hydroxymethylpyrimidine phosphate (HMP-P) moiety of thiamine from aminoimidazole ribotide (AIR) in a radical S-adenosyl-L-methionine (SAM)-dependent reaction. The polypeptide is Phosphomethylpyrimidine synthase (Pyrococcus furiosus (strain ATCC 43587 / DSM 3638 / JCM 8422 / Vc1)).